The sequence spans 874 residues: Alanine--tRNA ligase (874 aa).

Residues histidine 564, histidine 568, cysteine 665, and histidine 669 each contribute to the Zn(2+) site.

Belongs to the class-II aminoacyl-tRNA synthetase family. Requires Zn(2+) as cofactor.

Its subcellular location is the cytoplasm. The catalysed reaction is tRNA(Ala) + L-alanine + ATP = L-alanyl-tRNA(Ala) + AMP + diphosphate. Its function is as follows. Catalyzes the attachment of alanine to tRNA(Ala) in a two-step reaction: alanine is first activated by ATP to form Ala-AMP and then transferred to the acceptor end of tRNA(Ala). Also edits incorrectly charged Ser-tRNA(Ala) and Gly-tRNA(Ala) via its editing domain. The polypeptide is Alanine--tRNA ligase (Burkholderia thailandensis (strain ATCC 700388 / DSM 13276 / CCUG 48851 / CIP 106301 / E264)).